Here is a 37-residue protein sequence, read N- to C-terminus: Toxin Bcg III 28.78 (37 aa).

Residues cysteine 6 and cysteine 31 are joined by a disulfide bond.

The protein resides in the secreted. The protein localises to the nematocyst. The sequence is that of Toxin Bcg III 28.78 from Bunodosoma cangicum (Sea anemone).